The chain runs to 307 residues: UDP-3-O-acyl-N-acetylglucosamine deacetylase (307 aa).

Zn(2+) contacts are provided by histidine 78, histidine 241, and aspartate 245. The active-site Proton donor is the histidine 268.

This sequence belongs to the LpxC family. Zn(2+) is required as a cofactor.

The enzyme catalyses a UDP-3-O-[(3R)-3-hydroxyacyl]-N-acetyl-alpha-D-glucosamine + H2O = a UDP-3-O-[(3R)-3-hydroxyacyl]-alpha-D-glucosamine + acetate. It participates in glycolipid biosynthesis; lipid IV(A) biosynthesis; lipid IV(A) from (3R)-3-hydroxytetradecanoyl-[acyl-carrier-protein] and UDP-N-acetyl-alpha-D-glucosamine: step 2/6. Functionally, catalyzes the hydrolysis of UDP-3-O-myristoyl-N-acetylglucosamine to form UDP-3-O-myristoylglucosamine and acetate, the committed step in lipid A biosynthesis. The chain is UDP-3-O-acyl-N-acetylglucosamine deacetylase from Delftia acidovorans (strain DSM 14801 / SPH-1).